Consider the following 267-residue polypeptide: Syntaxin-72 (267 aa).

At 1–244 (MPVIDIIFRV…QLVQMRSSRN (244 aa)) the chain is on the cytoplasmic side. Residues 53–87 (KAELASTEKNRAAAVAMNAEVRRTKARLAEDVVKL) adopt a coiled-coil conformation. The t-SNARE coiled-coil homology domain maps to 173 to 235 (EMRRKKQDEG…KNTNVRLKKQ (63 aa)). The helical; Anchor for type IV membrane protein transmembrane segment at 245-265 (FCIDIILLCVILGIVSYIYNA) threads the bilayer. Over 266–267 (LN) the chain is Vesicular.

It belongs to the syntaxin family. As to quaternary structure, part of the t-SNARE complex. As to expression, expressed in root, leaf, stem, flower and silique.

Its subcellular location is the membrane. In terms of biological role, vesicle trafficking protein that functions in the secretory pathway. The polypeptide is Syntaxin-72 (SYP72) (Arabidopsis thaliana (Mouse-ear cress)).